Consider the following 97-residue polypeptide: Putative septation protein SpoVG (97 aa).

This sequence belongs to the SpoVG family.

Its function is as follows. Could be involved in septation. The polypeptide is Putative septation protein SpoVG (Anaeromyxobacter sp. (strain Fw109-5)).